Here is a 632-residue protein sequence, read N- to C-terminus: Putative ferric transport system permease protein FbpB 1 (632 aa).

Transmembrane regions (helical) follow at residues 5–25 (SFNL…LPLL), 37–57 (LFLT…YKIS), 58–78 (MGYS…LSLA), 93–113 (LLCI…AIFV), 144–164 (LFLS…FALY), 178–198 (IFSI…VTLM), 223–243 (GFNG…FMIL), 270–290 (YQII…IVFI), 299–319 (PLVL…YIAG), 330–350 (LGSM…IWIG), 377–397 (IIGM…SIFY), 436–456 (IYAG…AYIV), 469–489 (FLTM…YILA), 490–510 (FNNA…SMVM), and 547–567 (CFIV…TSFV). One can recognise an ABC transmembrane type-1 1 domain in the interval 140–345 (ITNSLFLSGF…IFSLAIFIIQ (206 aa)). Positions 431-632 (LINTLIYAGI…DCRRYAYFPF (202 aa)) constitute an ABC transmembrane type-1 2 domain.

Belongs to the binding-protein-dependent transport system permease family. FbpB subfamily. In terms of assembly, the complex is composed of two ATP-binding proteins (FbpC), two transmembrane proteins (FbpB) and a solute-binding protein (FbpA).

It localises to the cell inner membrane. Functionally, part of the ABC transporter complex FbpABC (TC 3.A.1.10.1) involved in Fe(3+) ions import. Probably responsible for the translocation of the substrate across the membrane. The sequence is that of Putative ferric transport system permease protein FbpB 1 (fbpB1) from Haemophilus influenzae (strain ATCC 51907 / DSM 11121 / KW20 / Rd).